The primary structure comprises 326 residues: Heat-inducible transcription repressor HrcA (326 aa).

It belongs to the HrcA family.

In terms of biological role, negative regulator of class I heat shock genes (grpE-dnaK-dnaJ and groELS operons). Prevents heat-shock induction of these operons. This is Heat-inducible transcription repressor HrcA from Staphylococcus saprophyticus subsp. saprophyticus (strain ATCC 15305 / DSM 20229 / NCIMB 8711 / NCTC 7292 / S-41).